A 318-amino-acid chain; its full sequence is MAEHQVPRPQKPPRRDVHGVLLLDKPIGWSSNDALIRAKRLLWAKKAGHTGTLDPLATGLLPLCFGEATKFSQDLLDADKTYETVVRLGIRTSTADAEGEVLSERPVSVTPEQLQAAIARFVGEIDQVPPMHSALKKDGKPLYEYARAGQTVERAARRVTIYAIDVLATDLQSAEPTVTLRVSCSKGTYIRTLGEDIGEALGCGGHLVALRRTQVGNLTLDGAVTLEALDAAAEDARGALLAPVDALLQTLPRVELDAQESRRFLHGQRLPLQLALPNADQVRVYGVRDAIAADATASLLGVAAWQGGVLRPERLVHL.

Asp54 acts as the Nucleophile in catalysis.

Belongs to the pseudouridine synthase TruB family. Type 1 subfamily.

It catalyses the reaction uridine(55) in tRNA = pseudouridine(55) in tRNA. Functionally, responsible for synthesis of pseudouridine from uracil-55 in the psi GC loop of transfer RNAs. The sequence is that of tRNA pseudouridine synthase B from Ralstonia pickettii (strain 12J).